Reading from the N-terminus, the 199-residue chain is Patulin biosynthesis cluster protein F (199 aa).

An N-terminal signal peptide occupies residues 1 to 21 (MKSSLWVSLAVSLIGLGPAAA). N-linked (GlcNAc...) asparagine glycans are attached at residues N129 and N183.

Belongs to the patF family.

It is found in the cytoplasm. It localises to the cytosol. The catalysed reaction is phyllostine = neopatulin. It functions in the pathway mycotoxin biosynthesis; patulin biosynthesis. Part of the gene cluster that mediates the biosynthesis of patulin, an acetate-derived tetraketide mycotoxin produced by several fungal species that shows antimicrobial properties against several bacteria. PatF catalyzes the conversion of phyllostine into neopatulin. The pathway begins with the synthesis of 6-methylsalicylic acid by the polyketide synthase (PKS) patK via condensation of acetate and malonate units. The 6-methylsalicylic acid decarboxylase patG then catalyzes the decarboxylation of 6-methylsalicylic acid to yield m-cresol (also known as 3-methylphenol). These first reactions occur in the cytosol. The intermediate m-cresol is then transported into the endoplasmic reticulum where the cytochrome P450 monooxygenase patH converts it to m-hydroxybenzyl alcohol, which is further converted to gentisyl alcohol by the cytochrome P450 monooxygenase patI. The oxidoreductases patJ and patO further convert gentisyl alcohol to isoepoxydon in the vacuole. PatN catalyzes then the transformation of isoepoxydon into phyllostine. The cluster protein patF is responsible for the conversion from phyllostine to neopatulin whereas the alcohol dehydrogenase patD converts neopatulin to E-ascladiol. The steps between isoepoxydon and E-ascladiol occur in the cytosol, and E-ascladiol is probably secreted to the extracellular space by one of the cluster-specific transporters patC or patM. Finally, the secreted patulin synthase patE catalyzes the conversion of E-ascladiol to patulin. The polypeptide is Patulin biosynthesis cluster protein F (Penicillium expansum (Blue mold rot fungus)).